The following is a 225-amino-acid chain: Alpha-tubulin N-acetyltransferase 1 (225 aa).

The region spanning 1-190 is the N-acetyltransferase domain; sequence MEFPFDVDAL…NNFVIFEGFF (190 aa). K56 bears the N6-acetyllysine; by autocatalysis mark. Position 124–137 (124–137) interacts with acetyl-CoA; it reads FYIHESLQRHGHGR. An N6-acetyllysine; by autocatalysis modification is found at K146. 160-169 is a binding site for acetyl-CoA; it reads SQKLLKFLNK. A disordered region spans residues 195–225; the sequence is PPARKLPPKRAEGDIKPYSSSDRESGLPQGW. A compositionally biased stretch (basic and acidic residues) spans 203–219; the sequence is KRAEGDIKPYSSSDRES. Position 210 is an N6-acetyllysine; by autocatalysis (K210).

It belongs to the acetyltransferase ATAT1 family. Component of the BBSome complex. Interacts with AP2 alpha-adaptins, including AP2A2, but not with AP1 gamma-adaptin (AP1G1/AP1G2); this interaction is required for efficient alpha-tubulin acetylation, hence clathrin-coated pits are sites of microtubule acetylation. Autoacetylation strongly increases tubulin acetylation.

It is found in the cytoplasm. Its subcellular location is the membrane. The protein resides in the clathrin-coated pit. It localises to the cell junction. The protein localises to the focal adhesion. It is found in the cell projection. Its subcellular location is the axon. The protein resides in the cytoskeleton. It localises to the spindle. The catalysed reaction is L-lysyl-[alpha-tubulin] + acetyl-CoA = N(6)-acetyl-L-lysyl-[alpha-tubulin] + CoA + H(+). Its function is as follows. Specifically acetylates 'Lys-40' in alpha-tubulin on the lumenal side of microtubules. Promotes microtubule destabilization and accelerates microtubule dynamics; this activity may be independent of acetylation activity. Acetylates alpha-tubulin with a slow enzymatic rate, due to a catalytic site that is not optimized for acetyl transfer. Enters the microtubule through each end and diffuses quickly throughout the lumen of microtubules. Acetylates only long/old microtubules because of its slow acetylation rate since it does not have time to act on dynamically unstable microtubules before the enzyme is released. Required for normal sperm flagellar function. Promotes directional cell locomotion and chemotaxis, through AP2A2-dependent acetylation of alpha-tubulin at clathrin-coated pits that are concentrated at the leading edge of migrating cells. May facilitate primary cilium assembly. This chain is Alpha-tubulin N-acetyltransferase 1, found in Bos taurus (Bovine).